The sequence spans 1317 residues: DNA-directed RNA polymerase subunit beta' (1317 aa).

Residues cysteine 60, cysteine 62, cysteine 75, and cysteine 78 each contribute to the Zn(2+) site. The disordered stretch occupies residues 183–209 (ELEDEGAKSDVKRKVRDGGEREMRQLR). The Mg(2+) site is built by aspartate 535, aspartate 537, and aspartate 539. Residues cysteine 890, cysteine 967, cysteine 974, and cysteine 977 each coordinate Zn(2+).

This sequence belongs to the RNA polymerase beta' chain family. In terms of assembly, the RNAP catalytic core consists of 2 alpha, 1 beta, 1 beta' and 1 omega subunit. When a sigma factor is associated with the core the holoenzyme is formed, which can initiate transcription. Mg(2+) is required as a cofactor. Requires Zn(2+) as cofactor.

It carries out the reaction RNA(n) + a ribonucleoside 5'-triphosphate = RNA(n+1) + diphosphate. In terms of biological role, DNA-dependent RNA polymerase catalyzes the transcription of DNA into RNA using the four ribonucleoside triphosphates as substrates. The polypeptide is DNA-directed RNA polymerase subunit beta' (Mycolicibacterium vanbaalenii (strain DSM 7251 / JCM 13017 / BCRC 16820 / KCTC 9966 / NRRL B-24157 / PYR-1) (Mycobacterium vanbaalenii)).